A 149-amino-acid chain; its full sequence is Ribosome-binding factor A (149 aa).

Belongs to the RbfA family. In terms of assembly, monomer. Binds 30S ribosomal subunits, but not 50S ribosomal subunits or 70S ribosomes.

The protein resides in the cytoplasm. One of several proteins that assist in the late maturation steps of the functional core of the 30S ribosomal subunit. Associates with free 30S ribosomal subunits (but not with 30S subunits that are part of 70S ribosomes or polysomes). Required for efficient processing of 16S rRNA. May interact with the 5'-terminal helix region of 16S rRNA. This is Ribosome-binding factor A from Caulobacter vibrioides (strain ATCC 19089 / CIP 103742 / CB 15) (Caulobacter crescentus).